Here is a 147-residue protein sequence, read N- to C-terminus: Small ribosomal subunit protein uS5 (147 aa).

The region spanning 9–72 (FEEVVVNISR…DNAFKNITTV (64 aa)) is the S5 DRBM domain.

Belongs to the universal ribosomal protein uS5 family. As to quaternary structure, part of the 30S ribosomal subunit. Contacts proteins S4 and S8.

Its function is as follows. With S4 and S12 plays an important role in translational accuracy. Functionally, located at the back of the 30S subunit body where it stabilizes the conformation of the head with respect to the body. This is Small ribosomal subunit protein uS5 from Nitratiruptor sp. (strain SB155-2).